Consider the following 754-residue polypeptide: Neprilysin-1 (754 aa).

The helical; Signal-anchor for type II membrane protein transmembrane segment at 5–27 (FGPPIVFLISCYALILCGTVDAL) threads the bilayer. N-linked (GlcNAc...) asparagine glycosylation is found at N38, N81, N132, N217, N273, N303, and N441. The region spanning 63-754 (VGDSEGYQEA…MNPTKRCVVW (692 aa)) is the Peptidase M13 domain. Disulfide bonds link C87–C739, C95–C699, C151–C414, and C624–C751. H587 is a Zn(2+) binding site. E588 is a catalytic residue. H591 is a binding site for Zn(2+). N-linked (GlcNAc...) asparagine glycosylation occurs at N612. E649 lines the Zn(2+) pocket. Catalysis depends on D653, which acts as the Proton donor.

This sequence belongs to the peptidase M13 family. Requires Zn(2+) as cofactor. As to expression, specifically expressed in pharyngeal cells and a single head neuron.

The protein localises to the membrane. Its function is as follows. Probable cell surface protease. Required to control the neuronal innervation of pharyngeal pumping. This is Neprilysin-1 (nep-1) from Caenorhabditis elegans.